A 572-amino-acid chain; its full sequence is Methionine--tRNA ligase (572 aa).

The 'HIGH' region signature appears at 11 to 21; it reads PYINGIKHLGN. C143, C146, C156, and C159 together coordinate Zn(2+). A 'KMSKS' region motif is present at residues 346–350; it reads QFSTS. Residue T349 participates in ATP binding.

The protein belongs to the class-I aminoacyl-tRNA synthetase family. MetG type 1 subfamily. As to quaternary structure, monomer. It depends on Zn(2+) as a cofactor.

It localises to the cytoplasm. It carries out the reaction tRNA(Met) + L-methionine + ATP = L-methionyl-tRNA(Met) + AMP + diphosphate. In terms of biological role, is required not only for elongation of protein synthesis but also for the initiation of all mRNA translation through initiator tRNA(fMet) aminoacylation. This Cereibacter sphaeroides (strain KD131 / KCTC 12085) (Rhodobacter sphaeroides) protein is Methionine--tRNA ligase.